Consider the following 252-residue polypeptide: MARFFIYLAYNGTRYSGWQTQPNAPSVQQTVEEAISTIVRQPVGVVGAGRTDAGVHAHEMVAHADLPCDTPAEAATLTERLNKLLPRDIVIYRMAPVKADAHARFDAISRTYHYYLTEQKDPFMEGLMLKTYRKLDFERMNEAAALLPRYIDFTSFSKLHTDVKTNNCRITEARWMPLAQTGQWVFSITADRFLRNMVRAIVGTLFHVGTGKLSITDFRDIIESQDRSRAGSSAPAHALYLERVVYPSDLFL.

Asp52 serves as the catalytic Nucleophile. Tyr112 is a binding site for substrate.

This sequence belongs to the tRNA pseudouridine synthase TruA family. As to quaternary structure, homodimer.

The catalysed reaction is uridine(38/39/40) in tRNA = pseudouridine(38/39/40) in tRNA. Its function is as follows. Formation of pseudouridine at positions 38, 39 and 40 in the anticodon stem and loop of transfer RNAs. The protein is tRNA pseudouridine synthase A of Porphyromonas gingivalis (strain ATCC 33277 / DSM 20709 / CIP 103683 / JCM 12257 / NCTC 11834 / 2561).